We begin with the raw amino-acid sequence, 82 residues long: Consomatin Mao1 (82 aa).

Positions 1 to 22 (MQTASWVMVMMMVWITAPLSEG) are cleaved as a signal peptide. A propeptide spanning residues 23–57 (GKLNDVIRGLVPDDVTPQLILRSLFFHRPSDSVVR) is cleaved from the precursor. C65 and C70 are joined by a disulfide. W67 carries the D-tryptophan modification. 4-hydroxyproline occurs at positions 71, 72, and 74. A propeptide spanning residues 75-82 (WRRPNGKG) is cleaved from the precursor.

The protein belongs to the conotoxin C superfamily. Consomatin family. Expressed by the venom duct.

Its subcellular location is the secreted. Functionally, moderately activates human somatostatin receptors (SSTR) with a preferential activation of SSTR1 and SSTR4. In vivo, does not cause behavioral changes in mice within a few minutes of intracranial injection, but causes a progressive loss of movement thereafter. Four to five hours after injection, mice recover, even with the highest dose tested. Shows antinociception and antihyperalgesia activities in two mouse models of acute pain, most probably by acting outside the central nervous system. The chain is Consomatin Mao1 from Conus maioensis (Sea snail).